The following is a 316-amino-acid chain: Putative ring-cleaving dioxygenase MhqA (316 aa).

VOC domains follow at residues glycine 5–aspartate 131 and glycine 154–aspartate 278. Fe cation contacts are provided by histidine 8, histidine 226, and glutamate 274.

It belongs to the extradiol ring-cleavage dioxygenase family. Fe(2+) is required as a cofactor.

It is found in the cytoplasm. Its function is as follows. Putative ring-cleavage dioxygenase that may contribute to the degradation of aromatic compounds. The chain is Putative ring-cleaving dioxygenase MhqA (mhqA) from Bacillus subtilis (strain 168).